We begin with the raw amino-acid sequence, 473 residues long: Pentatricopeptide repeat-containing protein At3g60050 (473 aa).

9 PPR repeats span residues 148 to 182 (TVNSYHLLMKIFAECGEYKAMWRLVDEMVQDGFPT), 183 to 217 (TARTFNLLICSCGEAGLAKQAVVQFMKSKTFNYRP), 218 to 252 (FKHSYNAILNSLLGVKQYKLIEWVYKQMLEDGFSP), 253 to 287 (DVLTYNILLWTNYRLGKMDRFDRLFDEMARDGFSP), 288 to 322 (DSYTYNILLHILGKGNKPLAALTTLNHMKEVGIDP), 323 to 357 (SVLHYTTLIDGLSRAGNLEACKYFLDEMVKAGCRP), 358 to 392 (DVVCYTVMITGYVVSGELDKAKEMFREMTVKGQLP), 393 to 427 (NVFTYNSMIRGLCMAGEFREACWLLKEMESRGCNP), and 428 to 462 (NFVVYSTLVSYLRKAGKLSEARKVIREMVKKGHYV).

This sequence belongs to the PPR family. P subfamily.

This is Pentatricopeptide repeat-containing protein At3g60050 from Arabidopsis thaliana (Mouse-ear cress).